Reading from the N-terminus, the 107-residue chain is MILTTTHEIEGRRIERYLGIVFGEAIVGANVLRDLLAQIRDIVGGRSGAYEAELRRARETALAEMAEAARRLGADAVVGVDLDYEVLGSGNSMLMVTASGTAVKLAP.

The protein belongs to the UPF0145 family.

This chain is UPF0145 protein TT_C0892, found in Thermus thermophilus (strain ATCC BAA-163 / DSM 7039 / HB27).